The chain runs to 233 residues: Octanoyltransferase (233 aa).

Residues 38–218 form the BPL/LPL catalytic domain; it reads AGGPDTLLLL…AVCDALDGVL (181 aa). The segment covering 57–66 has biased composition (basic and acidic residues); the sequence is RRTEPHERPL. Residues 57–77 are disordered; it reads RRTEPHERPLDGTPVVDTDRG. Residues 76-83, 148-150, and 161-163 each bind substrate; these read RGGKITWH, AIG, and GFA. Catalysis depends on C179, which acts as the Acyl-thioester intermediate.

This sequence belongs to the LipB family.

The protein localises to the cytoplasm. The enzyme catalyses octanoyl-[ACP] + L-lysyl-[protein] = N(6)-octanoyl-L-lysyl-[protein] + holo-[ACP] + H(+). It participates in protein modification; protein lipoylation via endogenous pathway; protein N(6)-(lipoyl)lysine from octanoyl-[acyl-carrier-protein]: step 1/2. Catalyzes the transfer of endogenously produced octanoic acid from octanoyl-acyl-carrier-protein onto the lipoyl domains of lipoate-dependent enzymes. Lipoyl-ACP can also act as a substrate although octanoyl-ACP is likely to be the physiological substrate. In Mycolicibacterium paratuberculosis (strain ATCC BAA-968 / K-10) (Mycobacterium paratuberculosis), this protein is Octanoyltransferase.